The primary structure comprises 548 residues: Phenylalanine--tRNA ligase beta subunit (548 aa).

A B5 domain is found at 271-346; that stretch reads LSEAAAKLDP…ISIGYEALGP (76 aa). Aspartate 324, aspartate 330, glutamate 333, and aspartate 334 together coordinate Mg(2+).

Belongs to the phenylalanyl-tRNA synthetase beta subunit family. Type 2 subfamily. As to quaternary structure, tetramer of two alpha and two beta subunits. Mg(2+) is required as a cofactor.

The protein resides in the cytoplasm. It catalyses the reaction tRNA(Phe) + L-phenylalanine + ATP = L-phenylalanyl-tRNA(Phe) + AMP + diphosphate + H(+). This is Phenylalanine--tRNA ligase beta subunit from Aeropyrum pernix (strain ATCC 700893 / DSM 11879 / JCM 9820 / NBRC 100138 / K1).